A 194-amino-acid chain; its full sequence is FMN-dependent NADH:quinone oxidoreductase (194 aa).

Residues S9, 15-17 (SIS), and 85-88 (MYNF) contribute to the FMN site.

This sequence belongs to the azoreductase type 1 family. In terms of assembly, homodimer. The cofactor is FMN.

It catalyses the reaction 2 a quinone + NADH + H(+) = 2 a 1,4-benzosemiquinone + NAD(+). The catalysed reaction is N,N-dimethyl-1,4-phenylenediamine + anthranilate + 2 NAD(+) = 2-(4-dimethylaminophenyl)diazenylbenzoate + 2 NADH + 2 H(+). Its function is as follows. Quinone reductase that provides resistance to thiol-specific stress caused by electrophilic quinones. Also exhibits azoreductase activity. Catalyzes the reductive cleavage of the azo bond in aromatic azo compounds to the corresponding amines. In Xanthomonas oryzae pv. oryzae (strain KACC10331 / KXO85), this protein is FMN-dependent NADH:quinone oxidoreductase.